The chain runs to 293 residues: Ribosomal protein L11 methyltransferase (293 aa).

Residues Thr-145, Gly-166, Asp-188, and Asn-230 each coordinate S-adenosyl-L-methionine.

It belongs to the methyltransferase superfamily. PrmA family.

The protein localises to the cytoplasm. The enzyme catalyses L-lysyl-[protein] + 3 S-adenosyl-L-methionine = N(6),N(6),N(6)-trimethyl-L-lysyl-[protein] + 3 S-adenosyl-L-homocysteine + 3 H(+). Functionally, methylates ribosomal protein L11. This Shewanella halifaxensis (strain HAW-EB4) protein is Ribosomal protein L11 methyltransferase.